We begin with the raw amino-acid sequence, 84 residues long: Small ribosomal subunit protein uS17 (84 aa).

This sequence belongs to the universal ribosomal protein uS17 family. In terms of assembly, part of the 30S ribosomal subunit.

Its function is as follows. One of the primary rRNA binding proteins, it binds specifically to the 5'-end of 16S ribosomal RNA. This is Small ribosomal subunit protein uS17 from Alkaliphilus oremlandii (strain OhILAs) (Clostridium oremlandii (strain OhILAs)).